Here is a 161-residue protein sequence, read N- to C-terminus: Putative acetyltransferase SAR0816 (161 aa).

The protein belongs to the transferase hexapeptide repeat family.

The sequence is that of Putative acetyltransferase SAR0816 from Staphylococcus aureus (strain MRSA252).